Consider the following 472-residue polypeptide: Trigger factor (472 aa).

In terms of domain architecture, PPIase FKBP-type spans 174–261 (GDIAVLGFKG…LKDLKTRELP (88 aa)). Positions 430–472 (ENSTLTEQAPAADDADDAEKPAAKKKPAAKKKTPAKSKTDAEA) are disordered. Positions 452–464 (AKKKPAAKKKTPA) are enriched in basic residues.

This sequence belongs to the FKBP-type PPIase family. Tig subfamily.

The protein localises to the cytoplasm. The enzyme catalyses [protein]-peptidylproline (omega=180) = [protein]-peptidylproline (omega=0). Its function is as follows. Involved in protein export. Acts as a chaperone by maintaining the newly synthesized protein in an open conformation. Functions as a peptidyl-prolyl cis-trans isomerase. The protein is Trigger factor of Parasynechococcus marenigrum (strain WH8102).